The following is a 250-amino-acid chain: Undecaprenyl-diphosphatase (250 aa).

Helical transmembrane passes span 35–55 (DLSV…IFVG), 73–93 (INLT…GVLL), 100–120 (SLSN…ALLI), 146–166 (ALAI…SLLI), 171–191 (EIAL…AGLL), 200–220 (SYSI…LFIL), and 229–249 (LKIF…LGGI).

It belongs to the UppP family.

The protein localises to the cell inner membrane. It carries out the reaction di-trans,octa-cis-undecaprenyl diphosphate + H2O = di-trans,octa-cis-undecaprenyl phosphate + phosphate + H(+). Functionally, catalyzes the dephosphorylation of undecaprenyl diphosphate (UPP). Confers resistance to bacitracin. The chain is Undecaprenyl-diphosphatase from Thermosipho melanesiensis (strain DSM 12029 / CIP 104789 / BI429).